Consider the following 147-residue polypeptide: Hemoglobin subunit delta (147 aa).

The Globin domain occupies 3–147; it reads HLTPEEKAAV…VATALAHKYH (145 aa). Heme b is bound by residues His-64 and His-93.

It belongs to the globin family. As to quaternary structure, heterotetramer of two delta chains and two alpha chains. As to expression, red blood cells.

This is Hemoglobin subunit delta (HBD) from Ateles geoffroyi (Black-handed spider monkey).